The primary structure comprises 39 residues: Potassium channel toxin alpha-KTx 2.8 (39 aa).

3 disulfides stabilise this stretch: Cys-7/Cys-29, Cys-13/Cys-34, and Cys-17/Cys-36.

It belongs to the short scorpion toxin superfamily. Potassium channel inhibitor family. Alpha-KTx 02 subfamily. In terms of tissue distribution, expressed by the venom gland.

Its subcellular location is the secreted. Blocks Kv1.3/KCNA3 voltage-gated potassium channels of human T-lymphocytes (Kd=0.71 nM). The sequence is that of Potassium channel toxin alpha-KTx 2.8 from Centruroides elegans (Bark scorpion).